The chain runs to 297 residues: HTH-type transcriptional regulator ArgP (297 aa).

Residues 4–60 (PDYRTLQALDAVIRERGFERAAQKLCITQSAVSQRIKQLENMFGQPLLVRTVPPRPT) enclose the HTH lysR-type domain. Residues 21–40 (FERAAQKLCITQSAVSQRIK) constitute a DNA-binding region (H-T-H motif).

The protein belongs to the LysR transcriptional regulatory family. In terms of assembly, homodimer.

In terms of biological role, controls the transcription of genes involved in arginine and lysine metabolism. The protein is HTH-type transcriptional regulator ArgP of Escherichia coli O7:K1 (strain IAI39 / ExPEC).